The following is a 397-amino-acid chain: Mesoderm posterior protein 2 (397 aa).

Disordered regions lie at residues 28–92 (WDST…REKL), 152–208 (QRGD…GRRP), 222–295 (SPSA…VPWT), and 351–376 (PNSE…SGLR). Low complexity-rich tracts occupy residues 32 to 48 (SPAS…CDGA) and 58 to 71 (SCSS…ATTP). In terms of domain architecture, bHLH spans 81 to 135 (GQRQSASEREKLRMRTLARALHELRRFLPPSLAPAGQSLTKIETLRLAIRYIGHL). Repeat copies occupy residues 179–180 (GQ), 181–182 (GQ), 183–184 (GQ), 185–186 (GQ), 187–188 (GQ), 189–190 (GQ), 191–192 (GQ), 193–194 (GQ), 195–196 (GQ), 197–198 (GQ), 199–200 (GQ), 201–202 (GQ), and 203–204 (GQ). The 13 X 2 AA tandem repeats of G-Q stretch occupies residues 179-204 (GQGQGQGQGQGQGQGQGQGQGQGQGQ). Residues 180-206 (QGQGQGQGQGQGQGQGQGQGQGQGQGR) show a composition bias toward gly residues. Residues 235–244 (RLGRGVHDTD) are compositionally biased toward basic and acidic residues. 2 stretches are compositionally biased toward polar residues: residues 258-270 (PPYS…SDAS) and 365-375 (SEASPPQSSGL).

Post-translationally, degraded by the proteasome.

It localises to the nucleus. Its function is as follows. Transcription factor with important role in somitogenesis. Defines the rostrocaudal patterning of the somite by participating in distinct Notch pathways. Also regulates the FGF signaling pathway. Specifies the rostral half of the somites. Generates rostro-caudal polarity of somites by down-regulating in the presumptive rostral domain DLL1, a Notch ligand. Participates in the segment border formation by activating in the anterior presomitic mesoderm LFNG, a negative regulator of DLL1-Notch signaling. Acts as a strong suppressor of Notch activity. Together with MESP1 is involved in the epithelialization of somitic mesoderm and in the development of cardiac mesoderm. The sequence is that of Mesoderm posterior protein 2 (MESP2) from Homo sapiens (Human).